A 229-amino-acid chain; its full sequence is Choline-phosphate cytidylyltransferase (229 aa).

The CDP-choline site is built by leucine 6, alanine 8, glycine 9, tyrosine 80, asparagine 82, serine 85, and alanine 101. Residue aspartate 102 participates in Mg(2+) binding. CDP-choline is bound at residue tyrosine 185. Glutamate 211 and aspartate 213 together coordinate Mg(2+).

This sequence belongs to the LicC/PntC cytidylyltransferase family. In terms of assembly, monomer. Forms dimers in LicC-CDP-Cho-Mg(2+) crystals, but the monomer is probably the biologically functional unit. Mg(2+) is required as a cofactor.

It carries out the reaction phosphocholine + CTP + H(+) = CDP-choline + diphosphate. It participates in cell wall biogenesis; teichoic acid biosynthesis. The protein operates within cell wall biogenesis; lipoteichoic acid biosynthesis. Its activity is regulated as follows. Mg(2+) in slight excess of CTP gives maximal activity. Strongly inhibited by Ca(2+) and several other metal ions, such as Cd(2+), Co(2+), Cu(2+), Mn(2+), Ni(2+), Zn(2+) and Fe(2+). Also inhibited by Mg(2+) at high concentrations. CDP-Cho is a competitive inhibitor with respect to CTP, whereas diphosphate is a mixed-type inhibitor with respect to CTP. In terms of biological role, cytidylyltransferase involved in the biosynthesis of the phosphocholine containing cell wall constituents, teichoic acid and lipoteichoic acid, which are essential for cell separation and pathogenesis. Catalyzes the activation of phosphocholine (P-Cho) to CDP-choline (CDP-Cho). Can also use phosphoethanolamine and 2-aminoethylphosphonate, with much lower efficiency. Shows lower activity with dCTP, weak activity with ATP and no activity with GTP, TTP, UTP, dATP, dGTP and dTTP. In Streptococcus pneumoniae (strain ATCC BAA-255 / R6), this protein is Choline-phosphate cytidylyltransferase.